Consider the following 452-residue polypeptide: Neuromedin-K receptor (452 aa).

The Extracellular portion of the chain corresponds to 1-71; it reads MASVPRGENW…TNQFVQPSWR (71 aa). N-linked (GlcNAc...) asparagine glycans are attached at residues Asn-9, Asn-23, Asn-40, and Asn-60. A helical transmembrane segment spans residues 72-94; that stretch reads IALWSLAYGLVVAVAVFGNLIVI. At 95 to 104 the chain is on the cytoplasmic side; the sequence is WIILAHKRMR. A helical transmembrane segment spans residues 105–126; the sequence is TVTNYFLVNLAFSDASVAAFNT. At 127–146 the chain is on the extracellular side; the sequence is LINFIYGLHSEWYFGANYCR. A disulfide bond links Cys-145 and Cys-220. The chain crosses the membrane as a helical span at residues 147-168; that stretch reads FQNFFPITAVFASIYSMTAIAV. At 169 to 188 the chain is on the cytoplasmic side; the sequence is DRYMAIIDPLKPRLSATATK. A helical membrane pass occupies residues 189–209; sequence IVIGSIWILAFLLAFPQCLYS. Over 210–232 the chain is Extracellular; it reads KIKVMPGRTLCYVQWPEGPKQHF. A helical membrane pass occupies residues 233–257; it reads TYHIIVIILVYCFPLLIMGVTYTIV. The Cytoplasmic segment spans residues 258–286; sequence GITLWGGEIPGDTCDKYHEQLKAKRKVVK. Residues 287-308 form a helical membrane-spanning segment; it reads MMIIVVVTFAICWLPYHVYFIL. Topologically, residues 309–321 are extracellular; that stretch reads TAIYQQLNRWKYI. The chain crosses the membrane as a helical span at residues 322 to 346; that stretch reads QQVYLASFWLAMSSTMYNPIIYCCL. At 347–452 the chain is on the cytoplasmic side; the sequence is NKRFRAGFKR…SPYTSVDEYS (106 aa). Cys-361 is lipidated: S-palmitoyl cysteine. Positions 400–452 are disordered; sequence FDPNDGDPTKSSRKKRAVPRDPSANGCSHRGSKSASTTSSFISSPYTSVDEYS. The segment covering 432-452 has biased composition (low complexity); that stretch reads KSASTTSSFISSPYTSVDEYS.

Belongs to the G-protein coupled receptor 1 family. The anchoring of this receptor to the plasma membrane is probably mediated by the palmitoylation of a cysteine residue.

It localises to the cell membrane. Functionally, this is a receptor for the tachykinin neuropeptide neuromedin-K (neurokinin B). It is associated with G proteins that activate a phosphatidylinositol-calcium second messenger system. The rank order of affinity of this receptor to tachykinins is: neuromedin-K &gt; substance K &gt; substance P. The protein is Neuromedin-K receptor (Tacr3) of Rattus norvegicus (Rat).